A 419-amino-acid polypeptide reads, in one-letter code: Serine hydroxymethyltransferase (419 aa).

(6S)-5,6,7,8-tetrahydrofolate-binding positions include leucine 121 and 125 to 127 (GHL). The residue at position 229 (lysine 229) is an N6-(pyridoxal phosphate)lysine. 354 to 356 (SPF) serves as a coordination point for (6S)-5,6,7,8-tetrahydrofolate.

Belongs to the SHMT family. In terms of assembly, homodimer. The cofactor is pyridoxal 5'-phosphate.

It localises to the cytoplasm. The enzyme catalyses (6R)-5,10-methylene-5,6,7,8-tetrahydrofolate + glycine + H2O = (6S)-5,6,7,8-tetrahydrofolate + L-serine. The protein operates within one-carbon metabolism; tetrahydrofolate interconversion. It participates in amino-acid biosynthesis; glycine biosynthesis; glycine from L-serine: step 1/1. Catalyzes the reversible interconversion of serine and glycine with tetrahydrofolate (THF) serving as the one-carbon carrier. This reaction serves as the major source of one-carbon groups required for the biosynthesis of purines, thymidylate, methionine, and other important biomolecules. Also exhibits THF-independent aldolase activity toward beta-hydroxyamino acids, producing glycine and aldehydes, via a retro-aldol mechanism. In Coxiella burnetii (strain RSA 493 / Nine Mile phase I), this protein is Serine hydroxymethyltransferase.